The chain runs to 365 residues: MRAIIIGIGQCGGKIADIFSLVDFEAIAINTSRGDLEYLKHIPQDKRILIGESIVGGKGVNANPVLGREAMKRDLPMVMKKINSMVGYEDVDIFFLTFGFGGGTGAGGTPVLAEALKEEYPDSLVVAIGALPLKEEGIRPTINAAITIDKLSKVVDSIIAIDNNKLKESDEDISQAYERINYTIVERIASLLALIDVPGEQTLDASDLKFVLRAMGSFATVGYAKADAEKVKSLSRLIIRSFENEGLYLDVSLESALYGLVAIHGPPEVLKAKDIFEALNELTQRIRGKQIFRGFYPDPRERSVEVVTLLSGIYESKSIEDIILTAKKYAREFMKAKEEGEAKKRELLSGLPDFDDVYSGEESEG.

GTP contacts are provided by residues 10-14 (QCGGK), 103-105 (GTG), E136, N163, and N181.

Belongs to the CetZ family.

It localises to the cytoplasm. Involved in cell shape control. The polypeptide is Tubulin-like protein CetZ (Pyrococcus abyssi (strain GE5 / Orsay)).